Reading from the N-terminus, the 368-residue chain is N-acetylneuraminate epimerase 2 (368 aa).

Residues 1-19 (MNKTITALAILMASFAANA) form the signal peptide. 7 Kelch repeats span residues 40–84 (TVYI…AFID), 86–137 (NLYV…FVHN), 139–173 (KAYV…KINA), 174–219 (YYFD…VNKG), 222–265 (TWLI…VAGG), 287–336 (ENYQ…LWNN), and 338–367 (LLII…VTVQ). Catalysis depends on Glu-228, which acts as the Proton acceptor.

The protein belongs to the NanM family. In terms of assembly, homodimer.

Its subcellular location is the periplasm. The enzyme catalyses N-acetyl-alpha-neuraminate = N-acetyl-beta-neuraminate. Functionally, converts alpha-N-acetylneuranimic acid (Neu5Ac) to the beta-anomer, accelerating the equilibrium between the alpha- and beta-anomers. Probably facilitates sialidase-negative bacteria to compete successfully for limited amounts of extracellular Neu5Ac, which is likely taken up in the beta-anomer. In addition, the rapid removal of sialic acid from solution might be advantageous to the bacterium to damp down host responses. In Escherichia coli O6:H1 (strain CFT073 / ATCC 700928 / UPEC), this protein is N-acetylneuraminate epimerase 2.